Here is a 255-residue protein sequence, read N- to C-terminus: Flagellar L-ring protein (255 aa).

An N-terminal signal peptide occupies residues 1–25 (MRRHSTRKTVARVAVVALAVGVLAG). Cys-26 carries the N-palmitoyl cysteine lipid modification. Cys-26 is lipidated: S-diacylglycerol cysteine.

It belongs to the FlgH family. The basal body constitutes a major portion of the flagellar organelle and consists of four rings (L,P,S, and M) mounted on a central rod.

The protein resides in the cell outer membrane. It is found in the bacterial flagellum basal body. In terms of biological role, assembles around the rod to form the L-ring and probably protects the motor/basal body from shearing forces during rotation. The sequence is that of Flagellar L-ring protein from Rhodospirillum rubrum (strain ATCC 11170 / ATH 1.1.1 / DSM 467 / LMG 4362 / NCIMB 8255 / S1).